The primary structure comprises 181 residues: NAD(P)H-quinone oxidoreductase subunit I, chloroplastic (181 aa).

2 4Fe-4S ferredoxin-type domains span residues 55–84 (GRIHFEFDKCIACEVCVRVCPINLPVVDWE) and 95–124 (KNYSIDFAVCIFCGNCVEYCPTNCLSMTEE). [4Fe-4S] cluster-binding residues include C64, C67, C70, C74, C104, C107, C110, and C114.

Belongs to the complex I 23 kDa subunit family. In terms of assembly, NDH is composed of at least 16 different subunits, 5 of which are encoded in the nucleus. It depends on [4Fe-4S] cluster as a cofactor.

It localises to the plastid. The protein localises to the chloroplast thylakoid membrane. It catalyses the reaction a plastoquinone + NADH + (n+1) H(+)(in) = a plastoquinol + NAD(+) + n H(+)(out). It carries out the reaction a plastoquinone + NADPH + (n+1) H(+)(in) = a plastoquinol + NADP(+) + n H(+)(out). In terms of biological role, NDH shuttles electrons from NAD(P)H:plastoquinone, via FMN and iron-sulfur (Fe-S) centers, to quinones in the photosynthetic chain and possibly in a chloroplast respiratory chain. The immediate electron acceptor for the enzyme in this species is believed to be plastoquinone. Couples the redox reaction to proton translocation, and thus conserves the redox energy in a proton gradient. This Angiopteris evecta (Mule's foot fern) protein is NAD(P)H-quinone oxidoreductase subunit I, chloroplastic.